A 365-amino-acid chain; its full sequence is Chorismate synthase (365 aa).

Residues arginine 48 and arginine 54 each contribute to the NADP(+) site. FMN-binding positions include 125-127 (RSS), 238-239 (NA), glycine 278, 293-297 (KPTSS), and arginine 319.

This sequence belongs to the chorismate synthase family. As to quaternary structure, homotetramer. Requires FMNH2 as cofactor.

The catalysed reaction is 5-O-(1-carboxyvinyl)-3-phosphoshikimate = chorismate + phosphate. The protein operates within metabolic intermediate biosynthesis; chorismate biosynthesis; chorismate from D-erythrose 4-phosphate and phosphoenolpyruvate: step 7/7. Functionally, catalyzes the anti-1,4-elimination of the C-3 phosphate and the C-6 proR hydrogen from 5-enolpyruvylshikimate-3-phosphate (EPSP) to yield chorismate, which is the branch point compound that serves as the starting substrate for the three terminal pathways of aromatic amino acid biosynthesis. This reaction introduces a second double bond into the aromatic ring system. This is Chorismate synthase from Vesicomyosocius okutanii subsp. Calyptogena okutanii (strain HA).